The following is a 658-amino-acid chain: D-ornithine--citrate ligase (658 aa).

The protein belongs to the IucA/IucC family.

It catalyses the reaction D-ornithine + citrate + ATP = N(5)-[(S)-citryl]-D-ornithine + AMP + diphosphate + H(+). It functions in the pathway siderophore biosynthesis. In terms of biological role, involved in the biosynthesis of the siderophore staphyloferrin A. Catalyzes the ATP-dependent condensation of D-ornithine and citrate to form a citryl-D-ornithine intermediate. This Staphylococcus aureus (strain NCTC 8325 / PS 47) protein is D-ornithine--citrate ligase.